The primary structure comprises 514 residues: Pantetheinase (514 aa).

The signal sequence occupies residues 1–22 (MITSRLLVYVAVLVLCVIKVSS). N-linked (GlcNAc...) asparagine glycosylation is present at Asn39. Residues 40-307 (ATLVPVSHEE…GKLLLSQLDS (268 aa)) form the CN hydrolase domain. The active-site Proton acceptor is the Glu80. N-linked (GlcNAc...) asparagine glycans are attached at residues Asn87 and Asn147. Catalysis depends on Lys179, which acts as the Proton donor. Cys212 acts as the Nucleophile in catalysis. Residues Asn316 and Asn354 are each glycosylated (N-linked (GlcNAc...) asparagine). Asp492 carries GPI-anchor amidated aspartate lipidation. Residues 493–514 (PRSQVPGVMLLVIIPIVCSLSW) constitute a propeptide, removed in mature form.

This sequence belongs to the carbon-nitrogen hydrolase superfamily. BTD/VNN family. In terms of assembly, monomer.

It is found in the cell membrane. The catalysed reaction is (R)-pantetheine + H2O = cysteamine + (R)-pantothenate. In terms of biological role, amidohydrolase that hydrolyzes specifically one of the carboamide linkages in D-pantetheine thus recycling pantothenic acid (vitamin B5) and releasing cysteamine. The chain is Pantetheinase (VNN1) from Canis lupus familiaris (Dog).